Here is a 483-residue protein sequence, read N- to C-terminus: Altronate oxidoreductase (483 aa).

Residue 18–29 (IIQFGEGNFLRA) participates in NAD(+) binding.

This sequence belongs to the mannitol dehydrogenase family. UxaB subfamily.

It catalyses the reaction D-altronate + NAD(+) = keto-D-tagaturonate + NADH + H(+). The protein operates within carbohydrate metabolism; pentose and glucuronate interconversion. The polypeptide is Altronate oxidoreductase (Escherichia coli (strain 55989 / EAEC)).